The primary structure comprises 111 residues: MTKSIYIIIGYMLHDEEFFYFFFISFYTLWIVFFLLHLSFFSTLSFGIFHDFDTDVYIKVGNYILHFLELSKNSNLLKNSSEMLKHFRLASLMYMYVYTQMICPSLLGIRN.

A helical membrane pass occupies residues Phe18 to Phe41.

Its subcellular location is the membrane. This is an uncharacterized protein from Saccharomyces cerevisiae (strain ATCC 204508 / S288c) (Baker's yeast).